Here is a 932-residue protein sequence, read N- to C-terminus: Lon protease homolog 2, peroxisomal (932 aa).

One can recognise a Lon N-terminal domain in the interval 11–259; the sequence is LALVPLPKGS…RVVELLARQV (249 aa). A disordered region spans residues 304–340; the sequence is TGLTPPGAAGGRNNEDEKETNEVDELQKRLQEAELSP. Positions 328–340 are enriched in basic and acidic residues; it reads ELQKRLQEAELSP. Residue 486–493 coordinates ATP; sequence GPPGTGKT. The Lon proteolytic domain occupies 729–916; sequence HGRPGVVTGL…WEAIRQVWPG (188 aa). Active-site residues include Ser-822 and Lys-865. The Microbody targeting signal motif lies at 930-932; the sequence is SRL.

This sequence belongs to the peptidase S16 family.

The protein localises to the peroxisome matrix. The catalysed reaction is Hydrolysis of proteins in presence of ATP.. Functionally, ATP-dependent serine protease that mediates the selective degradation of misfolded and unassembled polypeptides in the peroxisomal matrix. Necessary for type 2 peroxisome targeting signal (PTS2)-containing protein processing and facilitates peroxisome matrix protein import. The chain is Lon protease homolog 2, peroxisomal from Aspergillus fumigatus (strain ATCC MYA-4609 / CBS 101355 / FGSC A1100 / Af293) (Neosartorya fumigata).